The chain runs to 361 residues: 3-dehydroquinate synthase (361 aa).

Residues 104–108 (GVIGD), 128–129 (TT), K140, and K149 contribute to the NAD(+) site. Residues E182, H245, and H262 each coordinate Zn(2+).

The protein belongs to the sugar phosphate cyclases superfamily. Dehydroquinate synthase family. Requires NAD(+) as cofactor. Co(2+) serves as cofactor. The cofactor is Zn(2+).

The protein localises to the cytoplasm. The enzyme catalyses 7-phospho-2-dehydro-3-deoxy-D-arabino-heptonate = 3-dehydroquinate + phosphate. The protein operates within metabolic intermediate biosynthesis; chorismate biosynthesis; chorismate from D-erythrose 4-phosphate and phosphoenolpyruvate: step 2/7. In terms of biological role, catalyzes the conversion of 3-deoxy-D-arabino-heptulosonate 7-phosphate (DAHP) to dehydroquinate (DHQ). This chain is 3-dehydroquinate synthase, found in Halalkalibacterium halodurans (strain ATCC BAA-125 / DSM 18197 / FERM 7344 / JCM 9153 / C-125) (Bacillus halodurans).